Here is a 274-residue protein sequence, read N- to C-terminus: Momilactone A synthase (274 aa).

The protein belongs to the short-chain dehydrogenases/reductases (SDR) family.

The catalysed reaction is 3beta-hydroxy-9beta-pimara-7,15-dien-19,6beta-olide + NAD(+) = momilactone A + NADH + H(+). It carries out the reaction 3beta-hydroxy-9beta-pimara-7,15-dien-19,6beta-olide + NADP(+) = momilactone A + NADPH + H(+). Its function is as follows. Involved in momilactone phytoalexins biosynthesis. Catalyzes the last step of momilactone A biosynthesis. The chain is Momilactone A synthase from Oryza sativa subsp. japonica (Rice).